The sequence spans 223 residues: Ribosomal RNA small subunit methyltransferase G (223 aa).

Residues Gly-85, Phe-90, and Arg-154 each coordinate S-adenosyl-L-methionine.

It belongs to the methyltransferase superfamily. RNA methyltransferase RsmG family.

The protein localises to the cytoplasm. The catalysed reaction is guanosine(527) in 16S rRNA + S-adenosyl-L-methionine = N(7)-methylguanosine(527) in 16S rRNA + S-adenosyl-L-homocysteine. In terms of biological role, specifically methylates the N7 position of guanine in position 527 of 16S rRNA. This Rhodopseudomonas palustris (strain TIE-1) protein is Ribosomal RNA small subunit methyltransferase G.